We begin with the raw amino-acid sequence, 93 residues long: Small ribosomal subunit protein uS19 (93 aa).

2 disordered regions span residues 1–24 (MPRS…AQNE) and 73–93 (EFAP…GRRR). 2 stretches are compositionally biased toward basic and acidic residues: residues 9–21 (PFVD…KVDA) and 81–93 (KGHE…GRRR).

The protein belongs to the universal ribosomal protein uS19 family.

Its function is as follows. Protein S19 forms a complex with S13 that binds strongly to the 16S ribosomal RNA. This chain is Small ribosomal subunit protein uS19, found in Kineococcus radiotolerans (strain ATCC BAA-149 / DSM 14245 / SRS30216).